The chain runs to 181 residues: Adenylate kinase (181 aa).

10–15 (GAGKGT) contacts ATP. Residues 30 to 59 (STGELFRKNIQDGTKLGVEAKRYLDAGDLV) are NMP. AMP contacts are provided by residues threonine 31, arginine 36, 57-59 (DLV), 85-88 (GYPR), and glutamine 92. The segment at 126 to 132 (GRGRADD) is LID. Arginine 127 serves as a coordination point for ATP. AMP-binding residues include arginine 129 and arginine 140. Glycine 166 lines the ATP pocket.

This sequence belongs to the adenylate kinase family. As to quaternary structure, monomer.

The protein localises to the cytoplasm. The catalysed reaction is AMP + ATP = 2 ADP. The protein operates within purine metabolism; AMP biosynthesis via salvage pathway; AMP from ADP: step 1/1. Its function is as follows. Catalyzes the reversible transfer of the terminal phosphate group between ATP and AMP. Plays an important role in cellular energy homeostasis and in adenine nucleotide metabolism. The chain is Adenylate kinase from Mycobacterium ulcerans (strain Agy99).